The following is a 502-amino-acid chain: MMTAPLPDIAAPAAPPRRLPFSFAKRQGLLFLCLEEQYWLACRPQVELAAIAEAQRFAGRRLPLKALGEDAFNQALAASYQHDSSAAMQLAEDLGGSLDLAALADQVPETEDLMEQEDDAPIIRLINAILGEAIRENASDIHLETFEKRLVVRFRVDGVLREVLEPKRELAALLVSRIKVMARLDIAEKRIPQDGRISLRVGGREVDIRVSTLPSANGERVVLRLLDKQAGRLNLQHLGMSERDRKLMDETVRKPHGILLVTGPTGSGKTTTLYASLTTLNDRTRNILTVEDPIEYHLEGIGQTQVNAKVDMTFARGLRAILRQDPDVVMVGEIRDRETAEIAVQASLTGHLVLSTLHTNSAIGAITRLVDMGIEPFLLSSSMLGVLAQRLVRVLCPACKEPYRADEAECALLGVDPAAPPTLHRARGCGECHQHGYRGRTGIYELVVFDDHMRSLIHNESSEQEMTRHARTSGPSIRDDGRRKVLEGVTTVEEVLRVTREE.

263-270 (GPTGSGKT) lines the ATP pocket. Zn(2+)-binding residues include Cys-396, Cys-399, Cys-429, and Cys-432. The disordered stretch occupies residues 461–480 (SSEQEMTRHARTSGPSIRDD).

It belongs to the GSP E family. As to quaternary structure, homodimer. Dimerization is directed by a relatively short domain near the extreme N-terminus and is essential for extracellular protein secretion. May form homooligomers. Interacts with XcpY/GspL. Forms an inner membrane platform subcomplex with XcpS/GspF, XcpY/GspL and XcpZ/GspM. The cofactor is Zn(2+).

The protein localises to the cell inner membrane. The enzyme catalyses ATP + H2O + cellular proteinSide 1 = ADP + phosphate + cellular proteinSide 2.. In terms of biological role, ATPase component of the type II secretion system required for the energy-dependent secretion of extracellular factors such as proteases and toxins from the periplasm. Acts as a molecular motor to provide the energy that is required for assembly of the pseudopilus and the extrusion of substrates generated in the cytoplasm. This Pseudomonas aeruginosa (strain ATCC 15692 / DSM 22644 / CIP 104116 / JCM 14847 / LMG 12228 / 1C / PRS 101 / PAO1) protein is Type II secretion system protein E (xcpR).